Here is a 312-residue protein sequence, read N- to C-terminus: uncharacterized protein (312 aa).

An HTH lysR-type domain is found at Pro-8–Thr-65. The H-T-H motif DNA-binding region spans Leu-25–Ser-45.

The protein belongs to the LysR transcriptional regulatory family.

This is an uncharacterized protein from Mycobacterium tuberculosis (strain CDC 1551 / Oshkosh).